The following is a 216-amino-acid chain: MEEEKNWIAVPTWRIPCRLERWHSLIKYLKYRTKDLQQVSYVPHHKVGWAWWTCSRVIFPLKEGAHLEVQGYWNLTPERGFLSSYAVRLTWYERSFYTDVTPDVADRLLHGSYFSSFTANEVRRAIRGEKILSHCNYPSAHTGQVPSLQFLALRVVQEGKDGSQGESTTRKQRRRNSRRGIRMARDNIRTSQQSSSQSLAQGTYFPGLAEVLGILA.

Position 98 is a phosphothreonine; by host MAP4K1 (threonine 98). The HCCH motif signature appears at 110–141; that stretch reads HGSYFSSFTANEVRRAIRGEKILSHCNYPSAH. Serine 147 bears the Phosphoserine; by host mark. The BC-box-like motif motif lies at 147 to 156; sequence SLQFLALRVV. Positions 154-168 are multimerization; sequence RVVQEGKDGSQGEST. Positions 159-181 are disordered; it reads GKDGSQGESTTRKQRRRNSRRGI. Residues 170–181 are compositionally biased toward basic residues; it reads RKQRRRNSRRGI.

This sequence belongs to the primate lentivirus group Vif protein family. As to quaternary structure, homomultimer; in vitro and presumably in vivo. Interacts with viral Pr55Gag precursor and human APOBEC3G. The interaction between Vif and APOBEC3G is species-specific, which may play a role in restricting the replication of HIV to humans. Forms an E3 ligase complex by interacting with human CUL5 and elongin BC complex (ELOB and ELOC). In terms of processing, highly phosphorylated on serine and threonine residues. Polyubiquitinated and degraded by the proteasome in the presence of APOBEC3G.

It localises to the host cytoplasm. It is found in the host cell membrane. Its subcellular location is the virion. Its function is as follows. Counteracts the innate antiviral activity of APOBEC3G. Forms a complex with host APOBEC3G thus preventing the entry of this lethally hypermutating enzyme into progeny virions. Functions as an adapter molecule, recruiting APOBEC3G to the ubiquitin-proteasome machinery. Targets APOBEC3G for degradation through the assembly with elongin BC complex, CUL5 and RBX1. Binds viral RNA and affects the stability of viral nucleoprotein core. May play a role in viral morphology. The protein is Virion infectivity factor (vif) of Human immunodeficiency virus type 2 subtype B (isolate EHO) (HIV-2).